We begin with the raw amino-acid sequence, 392 residues long: Chaperone protein DnaJ (392 aa).

Positions 2–67 (DYYTILGVAK…QKRESYDRYG (66 aa)) constitute a J domain. A CR-type zinc finger spans residues 149-227 (GVEKELLVSG…CRGQGRIKDK (79 aa)). Cysteine 162, cysteine 165, cysteine 179, cysteine 182, cysteine 201, cysteine 204, cysteine 215, and cysteine 218 together coordinate Zn(2+). 4 CXXCXGXG motif repeats span residues 162–169 (CDACSGSG), 179–186 (CDRCKGSG), 201–208 (CPDCSGEG), and 215–222 (CSVCRGQG).

This sequence belongs to the DnaJ family. As to quaternary structure, homodimer. Zn(2+) is required as a cofactor.

It localises to the cytoplasm. In terms of biological role, participates actively in the response to hyperosmotic and heat shock by preventing the aggregation of stress-denatured proteins and by disaggregating proteins, also in an autonomous, DnaK-independent fashion. Unfolded proteins bind initially to DnaJ; upon interaction with the DnaJ-bound protein, DnaK hydrolyzes its bound ATP, resulting in the formation of a stable complex. GrpE releases ADP from DnaK; ATP binding to DnaK triggers the release of the substrate protein, thus completing the reaction cycle. Several rounds of ATP-dependent interactions between DnaJ, DnaK and GrpE are required for fully efficient folding. Also involved, together with DnaK and GrpE, in the DNA replication of plasmids through activation of initiation proteins. The protein is Chaperone protein DnaJ of Chlamydia trachomatis serovar L2 (strain ATCC VR-902B / DSM 19102 / 434/Bu).